The primary structure comprises 108 residues: UPF0060 membrane protein Mvan_3406 (108 aa).

A run of 4 helical transmembrane segments spans residues 7–27 (LLFVLAAILEIGGAWLVWQGV), 32–52 (GLTWVGAGVIALGAYGFVAAF), 61–81 (VLAAYGGVFVAGSLLWGVVAD), and 87–107 (RWDITGAAVCLAGVGLIMYAP).

The protein belongs to the UPF0060 family.

The protein resides in the cell membrane. This Mycolicibacterium vanbaalenii (strain DSM 7251 / JCM 13017 / BCRC 16820 / KCTC 9966 / NRRL B-24157 / PYR-1) (Mycobacterium vanbaalenii) protein is UPF0060 membrane protein Mvan_3406.